Here is a 584-residue protein sequence, read N- to C-terminus: Protein DENND6A (584 aa).

Residues 1–23 form a disordered region; the sequence is MALWERGAGGAAEAGEDATEEPE. Residues 39-218 enclose the uDENN domain; that stretch reads HCVCVVGFDL…KLRIPTYRDK (180 aa). Residues 244–369 enclose the cDENN domain; the sequence is EVDLFRCFCP…VKVKKLKNLK (126 aa). The region spanning 371 to 504 is the dDENN domain; that stretch reads LDSKPGVYTS…RSRQKEMTQN (134 aa).

This sequence belongs to the DENND6 family.

It localises to the recycling endosome. The protein resides in the cytoplasm. Guanine nucleotide exchange factor (GEF) for RAB14. This Gallus gallus (Chicken) protein is Protein DENND6A (DENND6A).